A 549-amino-acid polypeptide reads, in one-letter code: CTP synthase (549 aa).

The segment at 1-272 is amidoligase domain; it reads MPPKSTTTKH…DAYVVRKLDL (272 aa). Serine 19 is a binding site for CTP. UTP is bound at residue serine 19. ATP is bound by residues 20 to 25 and aspartate 77; that span reads SLGKGL. Mg(2+)-binding residues include aspartate 77 and glutamate 146. Residues 153–155, 193–198, and lysine 229 each bind CTP; these read DIE and KTKPTQ. Residues 193 to 198 and lysine 229 each bind UTP; that span reads KTKPTQ. One can recognise a Glutamine amidotransferase type-1 domain in the interval 297 to 548; it reads NLALVGKYID…VKAAVERKTG (252 aa). Glycine 360 serves as a coordination point for L-glutamine. Cysteine 387 acts as the Nucleophile; for glutamine hydrolysis in catalysis. L-glutamine contacts are provided by residues 388-391, glutamate 411, and arginine 473; that span reads LGLQ. Residues histidine 521 and glutamate 523 contribute to the active site.

It belongs to the CTP synthase family. Homotetramer.

The enzyme catalyses UTP + L-glutamine + ATP + H2O = CTP + L-glutamate + ADP + phosphate + 2 H(+). It carries out the reaction L-glutamine + H2O = L-glutamate + NH4(+). It catalyses the reaction UTP + NH4(+) + ATP = CTP + ADP + phosphate + 2 H(+). It participates in pyrimidine metabolism; CTP biosynthesis via de novo pathway; CTP from UDP: step 2/2. Allosterically activated by GTP, when glutamine is the substrate; GTP has no effect on the reaction when ammonia is the substrate. The allosteric effector GTP functions by stabilizing the protein conformation that binds the tetrahedral intermediate(s) formed during glutamine hydrolysis. Inhibited by the product CTP, via allosteric rather than competitive inhibition. Catalyzes the ATP-dependent amination of UTP to CTP with either L-glutamine or ammonia as the source of nitrogen. Regulates intracellular CTP levels through interactions with the four ribonucleotide triphosphates. The protein is CTP synthase of Streptomyces avermitilis (strain ATCC 31267 / DSM 46492 / JCM 5070 / NBRC 14893 / NCIMB 12804 / NRRL 8165 / MA-4680).